The primary structure comprises 835 residues: Microcephalin (835 aa).

Positions 1 to 93 (MAAPILKDVV…AHIDESLFPA (93 aa)) constitute a BRCT 1 domain. A disordered region spans residues 184-206 (KEKRENLSPTSSQLIQQSHDNPS). Over residues 190–206 (LSPTSSQLIQQSHDNPS) the composition is skewed to polar residues. Residues Ser279, Ser287, Ser296, and Ser333 each carry the phosphoserine modification. Thr335 is subject to Phosphothreonine. The span at 346-361 (HSRPRSSSVKRKRVSH) shows a compositional bias: basic residues. 2 disordered regions span residues 346-376 (HSRP…RKRS) and 418-442 (PDNL…PAQF). Ser548 carries the phosphoserine modification. The interval 557–582 (GLKSTQNRGTTSKISNSSEGEAQSEH) is disordered. Over residues 559-577 (KSTQNRGTTSKISNSSEGE) the composition is skewed to polar residues. BRCT domains follow at residues 640–730 (SGRG…PFEL) and 751–833 (YRGT…NYLL).

In terms of assembly, interacts with CDC27 and maybe other components of the APC/C complex. Interacts with histone variant H2AX under DNA damage conditions.

It localises to the cytoplasm. It is found in the cytoskeleton. Its subcellular location is the microtubule organizing center. The protein localises to the centrosome. Its function is as follows. Implicated in chromosome condensation and DNA damage induced cellular responses. May play a role in neurogenesis and regulation of the size of the cerebral cortex. This Gorilla gorilla gorilla (Western lowland gorilla) protein is Microcephalin.